A 542-amino-acid chain; its full sequence is Chromatin structure-remodeling complex subunit rsc4 (542 aa).

One can recognise a Bromo 1 domain in the interval 6-116 (HNAPFDKTKF…NTANSLESKD (111 aa)). Disordered regions lie at residues 114-139 (SKDG…KPGT) and 246-327 (ISSF…PIPE). The segment covering 119–128 (LNEEENEEME) has biased composition (acidic residues). The 111-residue stretch at 139–249 (TNEIDVPKVI…QLSSSLISSF (111 aa)) folds into the Bromo 2 domain. The segment covering 252 to 266 (QPKEHSPATSKHEPE) has biased composition (basic and acidic residues). Residues S257, S271, S287, and S313 each carry the phosphoserine modification. The segment covering 268 to 280 (TPASPTPSVSAST) has biased composition (low complexity). Positions 286 to 298 (TSVAPSFITSDQA) are enriched in polar residues. Over residues 304-322 (LKSEEAHVESFSKESEKDQ) the composition is skewed to basic and acidic residues.

In terms of assembly, component of the RSC complex composed of at least arp9, arp42, rsc1, rsc4, rsc7, rsc9, rsc58, sfh1, snf21, ssr1, ssr2, ssr3 and ssr4. The complex interacts with histone and histone variant components of centromeric chromatin.

It is found in the nucleus. Component of the chromatin structure remodeling complex (RSC), which is involved in transcription regulation and nucleosome positioning. Controls particularly membrane and organelle development genes. The protein is Chromatin structure-remodeling complex subunit rsc4 (rsc4) of Schizosaccharomyces pombe (strain 972 / ATCC 24843) (Fission yeast).